Here is a 243-residue protein sequence, read N- to C-terminus: Exosome complex component Rrp41 (243 aa).

This sequence belongs to the RNase PH family. Rrp41 subfamily. In terms of assembly, component of the archaeal exosome complex. Forms a hexameric ring-like arrangement composed of 3 Rrp41-Rrp42 heterodimers. The hexameric ring associates with a trimer of Rrp4 and/or Csl4 subunits.

The protein resides in the cytoplasm. Catalytic component of the exosome, which is a complex involved in RNA degradation. Has 3'-&gt;5' exoribonuclease activity. Can also synthesize heteromeric RNA-tails. This is Exosome complex component Rrp41 from Sulfolobus acidocaldarius (strain ATCC 33909 / DSM 639 / JCM 8929 / NBRC 15157 / NCIMB 11770).